The sequence spans 88 residues: Small ribosomal subunit protein uS15c (88 aa).

Belongs to the universal ribosomal protein uS15 family. In terms of assembly, part of the 30S ribosomal subunit.

Its subcellular location is the plastid. The protein localises to the chloroplast. In Angiopteris evecta (Mule's foot fern), this protein is Small ribosomal subunit protein uS15c (rps15).